Consider the following 345-residue polypeptide: Tryptophan--tRNA ligase (345 aa).

Residues 12-14 and 20-21 contribute to the ATP site; these read RPT and GH. The short motif at 13-21 is the 'HIGH' region element; the sequence is PTGKLHLGH. D144 serves as a coordination point for L-tryptophan. ATP is bound by residues 156–158, L194, and 202–206; these read GKD and KMSKS. A 'KMSKS' region motif is present at residues 202–206; it reads KMSKS.

Belongs to the class-I aminoacyl-tRNA synthetase family. As to quaternary structure, homodimer.

It is found in the cytoplasm. It carries out the reaction tRNA(Trp) + L-tryptophan + ATP = L-tryptophyl-tRNA(Trp) + AMP + diphosphate + H(+). Functionally, catalyzes the attachment of tryptophan to tRNA(Trp). The chain is Tryptophan--tRNA ligase from Chlamydia caviae (strain ATCC VR-813 / DSM 19441 / 03DC25 / GPIC) (Chlamydophila caviae).